Consider the following 1406-residue polypeptide: Sterol 3-beta-glucosyltransferase (1406 aa).

Residues alanine 83–serine 231 are disordered. A compositionally biased stretch (polar residues) spans glycine 110 to serine 128. Positions serine 209–serine 231 are enriched in low complexity. The GRAM 1 domain maps to arginine 236–valine 286. The PH domain maps to valine 286–phenylalanine 385. 2 disordered regions span residues alanine 457–alanine 558 and leucine 576–proline 622. The span at histidine 468–threonine 478 shows a compositional bias: basic and acidic residues. 2 stretches are compositionally biased toward polar residues: residues glycine 490–alanine 499 and serine 531–tryptophan 548. Basic and acidic residues predominate over residues leucine 576 to glycine 587. Residues aspartate 730 to lysine 796 form the GRAM 2 domain. UDP-alpha-D-glucose contacts are provided by serine 917, arginine 918, aspartate 920, alanine 1220, histidine 1222, histidine 1235, glycine 1239, threonine 1240, aspartate 1259, and glutamine 1260. The segment at glutamine 1334–arginine 1406 is disordered. Over residues serine 1336 to alanine 1349 the composition is skewed to low complexity. The segment covering glutamine 1355–methionine 1375 has biased composition (acidic residues). The span at aspartate 1376–serine 1387 shows a compositional bias: basic and acidic residues. Residues leucine 1397 to arginine 1406 are compositionally biased toward polar residues.

Belongs to the glycosyltransferase 28 family.

It is found in the cytoplasm. The protein localises to the preautophagosomal structure membrane. The enzyme catalyses a sterol + UDP-alpha-D-glucose = a sterol 3-beta-D-glucoside + UDP + H(+). The catalysed reaction is ergosterol + UDP-alpha-D-glucose = ergosteryl 3-beta-D-glucoside + UDP + H(+). Sterol glycosyltransferase responsible for the glycosylation of ergosterol to form ergosterol-glucoside. In Aspergillus clavatus (strain ATCC 1007 / CBS 513.65 / DSM 816 / NCTC 3887 / NRRL 1 / QM 1276 / 107), this protein is Sterol 3-beta-glucosyltransferase.